The sequence spans 563 residues: MKTLLIIDANLGQARAYMAKTLLGAAARKAKLEIIDNPNDAEMAIVLGDSIPNDSALNGKNVWLGDISRAVAHPELFLSEAKGHAKPYTAPVAATAPVAASGPKRVVAVTACPTGVAHTFMAAEAIETEAKKRGWWVKVETRGSVGAGNAITPEEVAAADLVIVAADIEVDLAKFAGKPMYRTSTGLALKKTAQELDKAVAEATPYEPAGKAQTATTESKKESAGAYRHLLTGVSYMLPMVVAGGLCIALSFAFGIEAFKEPGTLAAALMQIGGGSAFALMVPVLAGYIAFSIADRPGLTPGLIGGMLAVSTGSGFIGGIIAGFLAGYIAKLISTQLKLPQSMEALKPILIIPLISSLVVGLAMIYLIGKPVAGILEGLTHWLQTMGTANAVLLGAILGGMMCTDMGGPVNKAAYAFGVGLLSTQTYGPMAAIMAAGMVPPLAMGLATMVARRKFDKAQQEGGKAALVLGLCFISEGAIPFAARDPMRVLPCCIVGGALTGAISMAIGAKLMAPHGGLFVLLIPGAITPVLGYLVAIIAGTLVAGLAYAFLKRPEVDAVAKAA.

PTS EIIB type-2 domains follow at residues 1 to 85 and 104 to 201; these read MKTL…KGHA and KRVV…KAVA. C112 acts as the Phosphocysteine intermediate; for EIIB activity in catalysis. Phosphocysteine; by EIIA is present on C112. Residues 226-561 form the PTS EIIC type-2 domain; it reads AYRHLLTGVS…KRPEVDAVAK (336 aa). A run of 9 helical transmembrane segments spans residues 236–256, 274–294, 304–324, 349–369, 382–402, 430–450, 463–483, 489–509, and 518–538; these read YMLP…AFGI, GGSA…FSIA, IGGM…IAGF, ILII…YLIG, WLQT…GGMM, MAAI…ATMV, GKAA…PFAA, VLPC…AIGA, and LFVL…VAII.

The protein resides in the cell inner membrane. The catalysed reaction is D-fructose(out) + N(pros)-phospho-L-histidyl-[protein] = D-fructose 1-phosphate(in) + L-histidyl-[protein]. In terms of biological role, the phosphoenolpyruvate-dependent sugar phosphotransferase system (sugar PTS), a major carbohydrate active transport system, catalyzes the phosphorylation of incoming sugar substrates concomitantly with their translocation across the cell membrane. The enzyme II FruAB PTS system is involved in fructose transport. This Escherichia coli (strain K12) protein is PTS system fructose-specific EIIB'BC component.